A 169-amino-acid chain; its full sequence is Protein kinase-interacting protein PIKP1 (169 aa).

Interacts with protein kinase PK1.

Plays a role in the stimulation of the viral kinase PK1 function in very late transcription and in expression of genes required for budded virus production. This chain is Protein kinase-interacting protein PIKP1 (AC24), found in Lepidoptera (butterflies and moths).